The sequence spans 388 residues: Staphopain A (388 aa).

A signal peptide spans methionine 1 to alanine 25. Residues glutamate 26–threonine 214 constitute a propeptide that is removed on maturation. Active-site residues include cysteine 238, histidine 334, and asparagine 355.

This sequence belongs to the peptidase C47 family. As to quaternary structure, in the cytoplasm, prematurely activated/folded ScpA forms a stable non-covalent complex with ScpB. Post-translationally, cleavage leads to the activation of ScpA probably by an auto-catalytic manner.

It is found in the secreted. The catalysed reaction is Broad endopeptidase action on proteins including elastin, but rather limited hydrolysis of small-molecule substrates. Assays are conveniently made with hemoglobin, casein or Z-Phe-Arg-NHMec as substrate.. Its activity is regulated as follows. Prematurely activated/folded staphopain A is inhibited by staphostatin A (ScpB), which is probably required to protect staphylococcal cytoplasmic proteins from degradation by ScpA. Also inactivated by heavy metal ions such as Hg(2+) or Ag(+), iodoacetamide, E-64 and human plasma. Cysteine protease that plays an important role in the inhibition of host innate immune response. Cleaves host elastins found in connective tissues, pulmonary surfactant protein A in the lungs, and the chemokine receptor CXCR2 on leukocytes. Proteolytic cleavage of surfactant protein A impairs bacterial phagocytosis by neutrophils while CXCR2 degradation blocks neutrophil activation and chemotaxis. Additionally, promotes vascular leakage by activating the plasma kallikerin/kinin system, resulting in hypotension. The chain is Staphopain A (sspP) from Staphylococcus aureus.